A 555-amino-acid polypeptide reads, in one-letter code: MFS-type transporter VdtG (555 aa).

The disordered stretch occupies residues 1–20 (MNGNGTADKPGPPGGKPFGP). Asparagine 4 is a glycosylation site (N-linked (GlcNAc...) asparagine). Helical transmembrane passes span 30 to 50 (TGFK…LTAL), 71 to 91 (DIGW…LLFG), and 101 to 121 (WVFL…GAAP). The N-linked (GlcNAc...) asparagine glycan is linked to asparagine 122. The next 2 helical transmembrane spans lie at 132-152 (IAGL…FFTV) and 162-182 (GIAG…GGGF). Asparagine 185 is a glycosylation site (N-linked (GlcNAc...) asparagine). 4 consecutive transmembrane segments (helical) span residues 190-210 (WCFY…LLFL), 232-252 (LGNL…QWGG), 262-282 (IVAL…VQLW), and 304-324 (AFTI…PIWF). N-linked (GlcNAc...) asparagine glycosylation is present at asparagine 329. Transmembrane regions (helical) follow at residues 337 to 357 (VMML…GFII), 364 to 384 (TPFM…LTTF), 393 to 413 (WIGY…QASL), 425 to 445 (PIGI…FLAV), and 497 to 517 (LMDV…AAAF). The interval 528 to 555 (AAGPGGPGGPGGPGGPGGPEGLRGGNKV) is disordered. Residues 530-555 (GPGGPGGPGGPGGPGGPEGLRGGNKV) show a composition bias toward gly residues.

Belongs to the major facilitator superfamily. TCR/Tet family.

It is found in the endoplasmic reticulum membrane. MFS-type transporter; part of the gene cluster that mediates the biosynthesis of viriditoxin, one of the 'classical' secondary metabolites produced by fungi and that has antibacterial activity. Is not essential for viriditoxin production. This Byssochlamys spectabilis (Paecilomyces variotii) protein is MFS-type transporter VdtG.